The following is a 277-amino-acid chain: Diaminopimelate epimerase (277 aa).

Residues Asn13, Gln46, and Asn65 each coordinate substrate. Cys74 (proton donor) is an active-site residue. Substrate contacts are provided by residues 75–76 (GN), Asn158, Asn191, and 209–210 (ER). Catalysis depends on Cys218, which acts as the Proton acceptor. 219 to 220 (GT) is a substrate binding site.

Belongs to the diaminopimelate epimerase family. As to quaternary structure, homodimer.

Its subcellular location is the cytoplasm. The enzyme catalyses (2S,6S)-2,6-diaminopimelate = meso-2,6-diaminopimelate. The protein operates within amino-acid biosynthesis; L-lysine biosynthesis via DAP pathway; DL-2,6-diaminopimelate from LL-2,6-diaminopimelate: step 1/1. Catalyzes the stereoinversion of LL-2,6-diaminopimelate (L,L-DAP) to meso-diaminopimelate (meso-DAP), a precursor of L-lysine and an essential component of the bacterial peptidoglycan. The chain is Diaminopimelate epimerase from Nitrosospira multiformis (strain ATCC 25196 / NCIMB 11849 / C 71).